We begin with the raw amino-acid sequence, 121 residues long: Small ribosomal subunit protein uS13 (121 aa).

Residues 94–121 (GLPMRGQRTRTNARTRKGPRKAAAALKK) are disordered.

The protein belongs to the universal ribosomal protein uS13 family. In terms of assembly, part of the 30S ribosomal subunit. Forms a loose heterodimer with protein S19. Forms two bridges to the 50S subunit in the 70S ribosome.

Located at the top of the head of the 30S subunit, it contacts several helices of the 16S rRNA. In the 70S ribosome it contacts the 23S rRNA (bridge B1a) and protein L5 of the 50S subunit (bridge B1b), connecting the 2 subunits; these bridges are implicated in subunit movement. Contacts the tRNAs in the A and P-sites. The sequence is that of Small ribosomal subunit protein uS13 from Polaromonas sp. (strain JS666 / ATCC BAA-500).